The chain runs to 443 residues: Oxygen-dependent coproporphyrinogen-III oxidase, mitochondrial (443 aa).

The transit peptide at 1-98 (MALRLGRLGS…EMVPKSSGAR (98 aa)) directs the protein to the mitochondrion. The disordered stretch occupies residues 89–112 (EMVPKSSGARSPSPGRREEDGDEL). Residue S101 is modified to Phosphoserine. Basic and acidic residues predominate over residues 103 to 112 (GRREEDGDEL). Positions 182 to 191 (VLQDGRVFEK) are important for dimerization. A coproporphyrinogen III-binding site is contributed by S233. Catalysis depends on H247, which acts as the Proton donor. 249–251 (NYR) contacts coproporphyrinogen III. Residues 381–417 (YVEFNLLYDRGTKFGLFTPGSRIESILMSLPLTARWE) form an important for dimerization region. N6-acetyllysine; alternate is present on K393. K393 is modified (N6-succinyllysine; alternate). Residue 400–402 (GSR) participates in coproporphyrinogen III binding.

This sequence belongs to the aerobic coproporphyrinogen-III oxidase family. Homodimer. In terms of tissue distribution, expressed in erythroid cells. Expressed in liver.

It localises to the mitochondrion intermembrane space. The enzyme catalyses coproporphyrinogen III + O2 + 2 H(+) = protoporphyrinogen IX + 2 CO2 + 2 H2O. Its pathway is porphyrin-containing compound metabolism; protoporphyrin-IX biosynthesis; protoporphyrinogen-IX from coproporphyrinogen-III (O2 route): step 1/1. Functionally, involved in the heme biosynthesis. Catalyzes the aerobic oxidative decarboxylation of propionate groups of rings A and B of coproporphyrinogen-III to yield the vinyl groups in protoporphyrinogen-IX. This chain is Oxygen-dependent coproporphyrinogen-III oxidase, mitochondrial (Cpox), found in Mus musculus (Mouse).